A 271-amino-acid chain; its full sequence is DNA repair protein RecO (271 aa).

The protein belongs to the RecO family.

Functionally, involved in DNA repair and RecF pathway recombination. The polypeptide is DNA repair protein RecO (Synechococcus sp. (strain CC9311)).